The chain runs to 148 residues: Large ribosomal subunit protein bL9 (148 aa).

It belongs to the bacterial ribosomal protein bL9 family.

Binds to the 23S rRNA. This is Large ribosomal subunit protein bL9 from Agathobacter rectalis (strain ATCC 33656 / DSM 3377 / JCM 17463 / KCTC 5835 / VPI 0990) (Eubacterium rectale).